A 387-amino-acid polypeptide reads, in one-letter code: Queuine tRNA-ribosyltransferase (387 aa).

The active-site Proton acceptor is the D105. Substrate-binding positions include 105–109 (DSGGF), D177, and G248. Residues 278–284 (GIGDLPS) form an RNA binding region. The active-site Nucleophile is the D297. The RNA binding; important for wobble base 34 recognition stretch occupies residues 302–306 (TRAAR). The Zn(2+) site is built by C335, C337, C340, and H366.

The protein belongs to the queuine tRNA-ribosyltransferase family. In terms of assembly, homodimer. Within each dimer, one monomer is responsible for RNA recognition and catalysis, while the other monomer binds to the replacement base PreQ1. Zn(2+) serves as cofactor.

It carries out the reaction 7-aminomethyl-7-carbaguanine + guanosine(34) in tRNA = 7-aminomethyl-7-carbaguanosine(34) in tRNA + guanine. Its pathway is tRNA modification; tRNA-queuosine biosynthesis. Functionally, catalyzes the base-exchange of a guanine (G) residue with the queuine precursor 7-aminomethyl-7-deazaguanine (PreQ1) at position 34 (anticodon wobble position) in tRNAs with GU(N) anticodons (tRNA-Asp, -Asn, -His and -Tyr). Catalysis occurs through a double-displacement mechanism. The nucleophile active site attacks the C1' of nucleotide 34 to detach the guanine base from the RNA, forming a covalent enzyme-RNA intermediate. The proton acceptor active site deprotonates the incoming PreQ1, allowing a nucleophilic attack on the C1' of the ribose to form the product. After dissociation, two additional enzymatic reactions on the tRNA convert PreQ1 to queuine (Q), resulting in the hypermodified nucleoside queuosine (7-(((4,5-cis-dihydroxy-2-cyclopenten-1-yl)amino)methyl)-7-deazaguanosine). This Protochlamydia amoebophila (strain UWE25) protein is Queuine tRNA-ribosyltransferase.